Here is a 155-residue protein sequence, read N- to C-terminus: Interleukin-2 (155 aa).

The first 20 residues, 1–20 (MYRMQLLSCIALTLALVANG), serve as a signal peptide directing secretion. Thr23 carries an O-linked (GalNAc...) threonine glycan. A disulfide bridge links Cys79 with Cys127.

This sequence belongs to the IL-2 family.

The protein resides in the secreted. Functionally, cytokine produced by activated CD4-positive helper T-cells and to a lesser extend activated CD8-positive T-cells and natural killer (NK) cells that plays pivotal roles in the immune response and tolerance. Binds to a receptor complex composed of either the high-affinity trimeric IL-2R (IL2RA/CD25, IL2RB/CD122 and IL2RG/CD132) or the low-affinity dimeric IL-2R (IL2RB and IL2RG). Interaction with the receptor leads to oligomerization and conformation changes in the IL-2R subunits resulting in downstream signaling starting with phosphorylation of JAK1 and JAK3. In turn, JAK1 and JAK3 phosphorylate the receptor to form a docking site leading to the phosphorylation of several substrates including STAT5. This process leads to activation of several pathways including STAT, phosphoinositide-3-kinase/PI3K and mitogen-activated protein kinase/MAPK pathways. Functions as a T-cell growth factor and can increase NK-cell cytolytic activity as well. Promotes strong proliferation of activated B-cells and subsequently immunoglobulin production. Plays a pivotal role in regulating the adaptive immune system by controlling the survival and proliferation of regulatory T-cells, which are required for the maintenance of immune tolerance. Moreover, participates in the differentiation and homeostasis of effector T-cell subsets, including Th1, Th2, Th17 as well as memory CD8-positive T-cells. The polypeptide is Interleukin-2 (IL2) (Capra hircus (Goat)).